We begin with the raw amino-acid sequence, 72 residues long: Holocyclotoxin-1 (72 aa).

An N-terminal signal peptide occupies residues 1 to 22; that stretch reads MSKVTTVFIGALVLLLLIENGF. Intrachain disulfides connect Cys-24–Cys-40, Cys-32–Cys-57, Cys-36–Cys-60, and Cys-42–Cys-70.

Expressed in salivary glands.

It localises to the secreted. Functionally, probable neurotoxin. The sequence is that of Holocyclotoxin-1 from Ixodes holocyclus (Australian paralysis tick).